Reading from the N-terminus, the 297-residue chain is 4-hydroxy-tetrahydrodipicolinate synthase (297 aa).

T50 provides a ligand contact to pyruvate. Y138 serves as the catalytic Proton donor/acceptor. K166 acts as the Schiff-base intermediate with substrate in catalysis. Residue I208 participates in pyruvate binding.

It belongs to the DapA family. In terms of assembly, homotetramer; dimer of dimers.

The protein localises to the cytoplasm. The catalysed reaction is L-aspartate 4-semialdehyde + pyruvate = (2S,4S)-4-hydroxy-2,3,4,5-tetrahydrodipicolinate + H2O + H(+). It participates in amino-acid biosynthesis; L-lysine biosynthesis via DAP pathway; (S)-tetrahydrodipicolinate from L-aspartate: step 3/4. Its function is as follows. Catalyzes the condensation of (S)-aspartate-beta-semialdehyde [(S)-ASA] and pyruvate to 4-hydroxy-tetrahydrodipicolinate (HTPA). The polypeptide is 4-hydroxy-tetrahydrodipicolinate synthase (Desulfotalea psychrophila (strain LSv54 / DSM 12343)).